A 174-amino-acid polypeptide reads, in one-letter code: Thioredoxin O, mitochondrial (174 aa).

The transit peptide at 1 to 59 (MALAHRLCRLPRLLPLAAAAAASKPYLPGKPSPAPPPPLSSPPPFPSLSRLFSTTPSSS) directs the protein to the mitochondrion. In terms of domain architecture, Thioredoxin spans 60 to 172 (GDSSMVVVGS…LESTMESLHK (113 aa)). Catalysis depends on nucleophile residues Cys96 and Cys99. Cysteines 96 and 99 form a disulfide.

Belongs to the thioredoxin family. Plant O-type subfamily.

The protein localises to the mitochondrion. Functionally, probable thiol-disulfide oxidoreductase that may participate in various redox reactions. The polypeptide is Thioredoxin O, mitochondrial (Oryza sativa subsp. japonica (Rice)).